A 310-amino-acid polypeptide reads, in one-letter code: AT-hook motif nuclear-localized protein 15 (310 aa).

2 disordered regions span residues 15–112 and 239–310; these read VESP…KESP and EEEQ…PPSY. 2 stretches are compositionally biased toward polar residues: residues 31 to 41 and 51 to 67; these read SNNNNPPTMTR and TTNN…SQEE. Positions 88-100 form a DNA-binding region, a.T hook; the sequence is RRPRGRPPGSKNK. The span at 94-104 shows a compositional bias: low complexity; that stretch reads PPGSKNKPKSP. The 140-residue stretch at 112–251 folds into the PPC domain; it reads PNSLQSHVLE…QQQEQPLQLE (140 aa). The segment covering 301–310 has biased composition (pro residues); sequence GPPPRAPPSY.

Its subcellular location is the nucleus. Functionally, transcription factor that specifically binds AT-rich DNA sequences related to the nuclear matrix attachment regions (MARs). Binds the DNA sequence GNFEI (GA-negative feedback element I) in the GA3OX1 promoter. Negatively regulates plant innate immunity (PTI) to pathogens through the down-regulation of the PAMP-triggered FRK1 expression. In Arabidopsis thaliana (Mouse-ear cress), this protein is AT-hook motif nuclear-localized protein 15.